The sequence spans 85 residues: RNA-binding protein Hfq (85 aa).

Residues 10–70 (DIFLNGARKN…ISTINPAKPL (61 aa)) form the Sm domain.

It belongs to the Hfq family. Homohexamer.

Its function is as follows. RNA chaperone that binds small regulatory RNA (sRNAs) and mRNAs to facilitate mRNA translational regulation in response to envelope stress, environmental stress and changes in metabolite concentrations. Also binds with high specificity to tRNAs. The chain is RNA-binding protein Hfq from Clostridium botulinum (strain 657 / Type Ba4).